The chain runs to 351 residues: Biotin synthase (351 aa).

Positions 49–265 constitute a Radical SAM core domain; the sequence is NRVRIHILDN…LSVFRLVNPD (217 aa). Residues Cys64, Cys68, and Cys71 each coordinate [4Fe-4S] cluster. The [2Fe-2S] cluster site is built by Cys108, Cys140, Cys200, and Arg269.

It belongs to the radical SAM superfamily. Biotin synthase family. In terms of assembly, homodimer. Requires [4Fe-4S] cluster as cofactor. The cofactor is [2Fe-2S] cluster.

The enzyme catalyses (4R,5S)-dethiobiotin + (sulfur carrier)-SH + 2 reduced [2Fe-2S]-[ferredoxin] + 2 S-adenosyl-L-methionine = (sulfur carrier)-H + biotin + 2 5'-deoxyadenosine + 2 L-methionine + 2 oxidized [2Fe-2S]-[ferredoxin]. Its pathway is cofactor biosynthesis; biotin biosynthesis; biotin from 7,8-diaminononanoate: step 2/2. In terms of biological role, catalyzes the conversion of dethiobiotin (DTB) to biotin by the insertion of a sulfur atom into dethiobiotin via a radical-based mechanism. The polypeptide is Biotin synthase (Leptospira biflexa serovar Patoc (strain Patoc 1 / Ames)).